The primary structure comprises 582 residues: Myoneurin (582 aa).

The region spanning 24–89 (CDCTIVIGEF…IYTGTLNLDS (66 aa)) is the BTB domain. Residues 169–197 (QGALAKKSSQTKKKKKAFNSPKTGQNKTV) are disordered. 2 short sequence motifs (nuclear localization signal) span residues 174 to 190 (KKSSQTKKKKKAFNSPK) and 257 to 262 (KRKRGK). Polar residues predominate over residues 188–197 (SPKTGQNKTV). S289 is modified (phosphoserine). The C2H2-type 1; degenerate zinc finger occupies 302-324 (PMCNTRGKVFSEASSLRRHMRIH). 6 consecutive C2H2-type zinc fingers follow at residues 330-352 (YVCHLCGKAFTQCNQLKTHVRTH), 358-381 (YKCELCDKGFAQKCQLVFHSRMHH), 387-409 (YKCDVCNLQFATSSNLKIHARKH), 415-437 (YVCDRCGQRFAQASTLTYHVRRH), 443-465 (YVCDTCGKAFAVSSSLITHSRKH), and 471-494 (FICELCGNSYTDIKNLKKHKTKVH). The tract at residues 489–538 (HKTKVHSGADKTPDSSAEDHTLSEQDSIQKSPLSETMDVKPSDTTLPLAL) is disordered. The span at 495 to 511 (SGADKTPDSSAEDHTLS) shows a compositional bias: basic and acidic residues. The span at 512–522 (EQDSIQKSPLS) shows a compositional bias: polar residues.

It belongs to the krueppel C2H2-type zinc-finger protein family.

The protein resides in the nucleus. The sequence is that of Myoneurin (MYNN) from Pongo abelii (Sumatran orangutan).